The sequence spans 277 residues: Shikimate dehydrogenase (NADP(+)) (277 aa).

Residues 19–21 and Thr-66 contribute to the shikimate site; that span reads SKS. The active-site Proton acceptor is the Lys-70. Residue Asp-82 participates in NADP(+) binding. Asn-91 and Asp-107 together coordinate shikimate. NADP(+) is bound by residues 133-137, 157-162, and Leu-222; these read GAGGA and NRTRAR. Tyr-224 serves as a coordination point for shikimate. An NADP(+)-binding site is contributed by Gly-245.

It belongs to the shikimate dehydrogenase family. Homodimer.

The catalysed reaction is shikimate + NADP(+) = 3-dehydroshikimate + NADPH + H(+). The protein operates within metabolic intermediate biosynthesis; chorismate biosynthesis; chorismate from D-erythrose 4-phosphate and phosphoenolpyruvate: step 4/7. In terms of biological role, involved in the biosynthesis of the chorismate, which leads to the biosynthesis of aromatic amino acids. Catalyzes the reversible NADPH linked reduction of 3-dehydroshikimate (DHSA) to yield shikimate (SA). The polypeptide is Shikimate dehydrogenase (NADP(+)) (Roseobacter denitrificans (strain ATCC 33942 / OCh 114) (Erythrobacter sp. (strain OCh 114))).